The sequence spans 311 residues: tRNA-cytidine(32) 2-sulfurtransferase (311 aa).

The PP-loop motif signature appears at 47-52; it reads SGGKDS. Cys-122, Cys-125, and Cys-213 together coordinate [4Fe-4S] cluster.

Belongs to the TtcA family. In terms of assembly, homodimer. Mg(2+) is required as a cofactor. Requires [4Fe-4S] cluster as cofactor.

It localises to the cytoplasm. The catalysed reaction is cytidine(32) in tRNA + S-sulfanyl-L-cysteinyl-[cysteine desulfurase] + AH2 + ATP = 2-thiocytidine(32) in tRNA + L-cysteinyl-[cysteine desulfurase] + A + AMP + diphosphate + H(+). The protein operates within tRNA modification. In terms of biological role, catalyzes the ATP-dependent 2-thiolation of cytidine in position 32 of tRNA, to form 2-thiocytidine (s(2)C32). The sulfur atoms are provided by the cysteine/cysteine desulfurase (IscS) system. This Enterobacter sp. (strain 638) protein is tRNA-cytidine(32) 2-sulfurtransferase.